The sequence spans 235 residues: Probable transcriptional regulatory protein JJD26997_0557 (235 aa).

The protein belongs to the TACO1 family.

The protein localises to the cytoplasm. The protein is Probable transcriptional regulatory protein JJD26997_0557 of Campylobacter jejuni subsp. doylei (strain ATCC BAA-1458 / RM4099 / 269.97).